The primary structure comprises 332 residues: Transaldolase (332 aa).

The Schiff-base intermediate with substrate role is filled by Lys136.

This sequence belongs to the transaldolase family. Type 1 subfamily.

Its subcellular location is the cytoplasm. The catalysed reaction is D-sedoheptulose 7-phosphate + D-glyceraldehyde 3-phosphate = D-erythrose 4-phosphate + beta-D-fructose 6-phosphate. It participates in carbohydrate degradation; pentose phosphate pathway; D-glyceraldehyde 3-phosphate and beta-D-fructose 6-phosphate from D-ribose 5-phosphate and D-xylulose 5-phosphate (non-oxidative stage): step 2/3. Transaldolase is important for the balance of metabolites in the pentose-phosphate pathway. The sequence is that of Transaldolase from Trichormus variabilis (strain ATCC 29413 / PCC 7937) (Anabaena variabilis).